The chain runs to 418 residues: Serine hydroxymethyltransferase (418 aa).

(6S)-5,6,7,8-tetrahydrofolate is bound by residues leucine 121 and 125 to 127 (GHL). Position 230 is an N6-(pyridoxal phosphate)lysine (lysine 230). (6S)-5,6,7,8-tetrahydrofolate-binding positions include glutamate 246 and 355–357 (SPF).

The protein belongs to the SHMT family. In terms of assembly, homodimer. Pyridoxal 5'-phosphate is required as a cofactor.

The protein localises to the cytoplasm. The catalysed reaction is (6R)-5,10-methylene-5,6,7,8-tetrahydrofolate + glycine + H2O = (6S)-5,6,7,8-tetrahydrofolate + L-serine. It participates in one-carbon metabolism; tetrahydrofolate interconversion. The protein operates within amino-acid biosynthesis; glycine biosynthesis; glycine from L-serine: step 1/1. Catalyzes the reversible interconversion of serine and glycine with tetrahydrofolate (THF) serving as the one-carbon carrier. This reaction serves as the major source of one-carbon groups required for the biosynthesis of purines, thymidylate, methionine, and other important biomolecules. Also exhibits THF-independent aldolase activity toward beta-hydroxyamino acids, producing glycine and aldehydes, via a retro-aldol mechanism. The protein is Serine hydroxymethyltransferase of Streptococcus pneumoniae (strain 70585).